A 230-amino-acid chain; its full sequence is Gilatoxin (230 aa).

The 230-residue stretch at 1-230 (IIGGQECDET…ISFLFWIQSI (230 aa)) folds into the Peptidase S1 domain. 5 disulfide bridges follow: cysteine 7-cysteine 146, cysteine 26-cysteine 42, cysteine 125-cysteine 193, cysteine 157-cysteine 172, and cysteine 183-cysteine 208. Histidine 41 acts as the Charge relay system in catalysis. Asparagine 84 carries an N-linked (GlcNAc...) asparagine glycan. Residue aspartate 93 is the Charge relay system of the active site. Serine 187 acts as the Charge relay system in catalysis.

It belongs to the peptidase S1 family. Post-translationally, extensively glycosylated, contains approximately 8 mol of monosaccharide per mol of toxin. In terms of tissue distribution, expressed by the mandibular venom gland.

Its subcellular location is the secreted. Has kallikrein-like activity, releases bradykinin from kininogen. Catalyzes the hydrolysis of various arginine ester substrates for trypsin and thrombin and degrades both angiotensin I and II by cleavage of the dipeptide Asp-Arg from the NH2-terminal end. Fibrinogen is also degraded but a fibrin clot is not produced. May have a potentiating effect on potent hemorrhagic toxins present in the venom. This is Gilatoxin from Heloderma horridum horridum (Mexican beaded lizard).